The chain runs to 495 residues: Methyl viologen resistance protein SmvA (495 aa).

The next 14 membrane-spanning stretches (helical) occupy residues tryptophan 5–leucine 25, leucine 44–leucine 64, leucine 73–threonine 93, tryptophan 96–leucine 116, valine 135–leucine 155, phenylalanine 158–threonine 178, proline 192–alanine 212, leucine 220–isoleucine 240, isoleucine 260–leucine 280, valine 299–valine 319, valine 327–phenylalanine 347, leucine 357–methionine 377, isoleucine 391–leucine 411, and valine 469–leucine 489.

This sequence belongs to the major facilitator superfamily. TCR/Tet family.

The protein resides in the cell inner membrane. Functionally, major efflux pump for acriflavine and other quaternary ammonium compounds (QACs). Also required for resistance to methyl viologen. This is Methyl viologen resistance protein SmvA (smvA) from Salmonella typhimurium (strain LT2 / SGSC1412 / ATCC 700720).